We begin with the raw amino-acid sequence, 223 residues long: MGQKGCPIGFRTGVTKKWRSLWYGNKQEFGKFLIEDVKIREHLRKKPSCQGAAGFVVRRMSGKIEVTIQTARPGLVIGKKGAEVDLLKEELRKLTGKEVWVEIAEIKRPELNAKLVADNIARQIERRVSFRRAMKKAMQSVMEAGAIGVKIQVSGRLAGAEIARSEWYKNGRVPLHTLRADIDYATASAETTYGIIGVKVWINLGEKTSTANASAGSAVSTAQ.

The KH type-2 domain occupies 39 to 117; the sequence is IREHLRKKPS…RPELNAKLVA (79 aa).

This sequence belongs to the universal ribosomal protein uS3 family. As to quaternary structure, part of the 30S ribosomal subunit. Forms a tight complex with proteins S10 and S14.

Binds the lower part of the 30S subunit head. Binds mRNA in the 70S ribosome, positioning it for translation. This is Small ribosomal subunit protein uS3 from Chlamydia felis (strain Fe/C-56) (Chlamydophila felis).